We begin with the raw amino-acid sequence, 233 residues long: Large ribosomal subunit protein uL1 (233 aa).

This sequence belongs to the universal ribosomal protein uL1 family. As to quaternary structure, part of the 50S ribosomal subunit.

Its function is as follows. Binds directly to 23S rRNA. The L1 stalk is quite mobile in the ribosome, and is involved in E site tRNA release. Functionally, protein L1 is also a translational repressor protein, it controls the translation of the L11 operon by binding to its mRNA. The sequence is that of Large ribosomal subunit protein uL1 from Polynucleobacter asymbioticus (strain DSM 18221 / CIP 109841 / QLW-P1DMWA-1) (Polynucleobacter necessarius subsp. asymbioticus).